The following is a 235-amino-acid chain: Uridylate kinase (235 aa).

9–12 (KLSG) serves as a coordination point for ATP. Gly-51 contacts UMP. ATP-binding residues include Gly-52 and Arg-56. UMP contacts are provided by residues Asp-71 and 132–139 (TGNPYFTT). Residues Thr-159, Tyr-165, and Asp-168 each coordinate ATP.

Belongs to the UMP kinase family. As to quaternary structure, homohexamer.

It is found in the cytoplasm. It catalyses the reaction UMP + ATP = UDP + ADP. Its pathway is pyrimidine metabolism; CTP biosynthesis via de novo pathway; UDP from UMP (UMPK route): step 1/1. Its activity is regulated as follows. Inhibited by UTP. Functionally, catalyzes the reversible phosphorylation of UMP to UDP. The chain is Uridylate kinase from Christiangramia forsetii (strain DSM 17595 / CGMCC 1.15422 / KT0803) (Gramella forsetii).